The sequence spans 72 residues: Large ribosomal subunit protein bL31 (72 aa).

This sequence belongs to the bacterial ribosomal protein bL31 family. Type A subfamily. Part of the 50S ribosomal subunit.

Its function is as follows. Binds the 23S rRNA. This Rhodospirillum rubrum (strain ATCC 11170 / ATH 1.1.1 / DSM 467 / LMG 4362 / NCIMB 8255 / S1) protein is Large ribosomal subunit protein bL31.